The sequence spans 149 residues: D-aminoacyl-tRNA deacylase (149 aa).

The short motif at 137 to 138 (GP) is the Gly-cisPro motif, important for rejection of L-amino acids element.

It belongs to the DTD family. Homodimer.

The protein localises to the cytoplasm. The enzyme catalyses glycyl-tRNA(Ala) + H2O = tRNA(Ala) + glycine + H(+). It catalyses the reaction a D-aminoacyl-tRNA + H2O = a tRNA + a D-alpha-amino acid + H(+). An aminoacyl-tRNA editing enzyme that deacylates mischarged D-aminoacyl-tRNAs. Also deacylates mischarged glycyl-tRNA(Ala), protecting cells against glycine mischarging by AlaRS. Acts via tRNA-based rather than protein-based catalysis; rejects L-amino acids rather than detecting D-amino acids in the active site. By recycling D-aminoacyl-tRNA to D-amino acids and free tRNA molecules, this enzyme counteracts the toxicity associated with the formation of D-aminoacyl-tRNA entities in vivo and helps enforce protein L-homochirality. This is D-aminoacyl-tRNA deacylase from Thioalkalivibrio sulfidiphilus (strain HL-EbGR7).